Reading from the N-terminus, the 369-residue chain is Dof zinc finger protein DOF2.5 (369 aa).

The Dof-type zinc-finger motif lies at 80–134 (LNCPRCNSTNTKFCYYNNYSLTQPRYFCKGCRRYWTEGGSLRNVPVGGSSRKNKR). Zn(2+) contacts are provided by C82, C85, C107, and C110. Disordered regions lie at residues 120–149 (LRNV…TIPS), 203–224 (EGNG…YGSS), 284–304 (TDHQ…HSDH), and 322–369 (SSSI…GSSW). A compositionally biased stretch (low complexity) spans 214–224 (PSSSSSVYGSS). Positions 284 to 297 (TDHQGLGHNSNNRS) are enriched in polar residues. Residues 342 to 362 (NNNNNNNSSPNNGYWSGMFST) show a composition bias toward low complexity.

In terms of tissue distribution, expressed in the vascular system of the mother plant, but not present in the seed and embryo. In maturing siliques, found all through the funiculus connecting the placenta to the ovule, but not in the ovule.

The protein localises to the nucleus. Transcription factor specifically involved in the maternal control of seed germination. Regulates transcription by binding to a 5'-AA[AG]G-3' consensus core sequence. May ensure the activation of a component that would trigger germination as a consequence of red light perception. The chain is Dof zinc finger protein DOF2.5 (DOF2.5) from Arabidopsis thaliana (Mouse-ear cress).